The chain runs to 264 residues: Phosphonates import ATP-binding protein PhnC (264 aa).

An ABC transporter domain is found at 7–254 (LSIRAASKTF…KLIDIYGPEF (248 aa)). Position 39–46 (39–46 (GPSGSGKS)) interacts with ATP.

This sequence belongs to the ABC transporter superfamily. Phosphonates importer (TC 3.A.1.9.1) family. The complex is composed of two ATP-binding proteins (PhnC), two transmembrane proteins (PhnE) and a solute-binding protein (PhnD).

The protein localises to the cell inner membrane. It carries out the reaction phosphonate(out) + ATP + H2O = phosphonate(in) + ADP + phosphate + H(+). Part of the ABC transporter complex PhnCDE involved in phosphonates import. Responsible for energy coupling to the transport system. The sequence is that of Phosphonates import ATP-binding protein PhnC from Caulobacter vibrioides (strain ATCC 19089 / CIP 103742 / CB 15) (Caulobacter crescentus).